Reading from the N-terminus, the 917-residue chain is Serine/arginine repetitive matrix protein 1 (917 aa).

Residue Met1 is modified to N-acetylmethionine. Positions 1–151 (MDAGFFRGTS…ASMKKQDEDK (151 aa)) are necessary for DNA and RNA-binding. Residues 1–156 (MDAGFFRGTS…QDEDKDKRDK (156 aa)) form a necessary for mRNA 3'-end cleavage and cytoplasmic accumulation region. The residue at position 7 (Arg7) is a Citrulline. A PWI domain is found at 27-126 (QLKFAECLEK…AGIPSAFLEL (100 aa)). Residue Lys127 forms a Glycyl lysine isopeptide (Lys-Gly) (interchain with G-Cter in SUMO2) linkage. Over residues 139–170 (EKLASMKKQDEDKDKRDKEEKESSREKRERSR) the composition is skewed to basic and acidic residues. The interval 139-917 (EKLASMKKQD…MRKAQVSPQS (779 aa)) is disordered. Residue Lys140 is modified to N6-acetyllysine. Residues 171-207 (SPRRRKSRSPSPRRRSSPVRRERKRSHSRSPRHRTKS) are compositionally biased toward basic residues. A compositionally biased stretch (basic and acidic residues) spans 214 to 234 (PEKKEKTPELPEPSVKVKEPS). Thr220 carries the phosphothreonine modification. Ser227 carries the post-translational modification Phosphoserine. A Glycyl lysine isopeptide (Lys-Gly) (interchain with G-Cter in SUMO1); alternate cross-link involves residue Lys231. A Glycyl lysine isopeptide (Lys-Gly) (interchain with G-Cter in SUMO2); alternate cross-link involves residue Lys231. Residues Ser234 and Ser240 each carry the phosphoserine modification. A Phosphothreonine modification is found at Thr241. The span at 246 to 275 (KVPKPEPIPEPKEPSPEKNSKKEKEKEKTR) shows a compositional bias: basic and acidic residues. Residue Lys249 forms a Glycyl lysine isopeptide (Lys-Gly) (interchain with G-Cter in SUMO2) linkage. Residue Ser260 is modified to Phosphoserine. 2 stretches are compositionally biased toward basic residues: residues 276–329 (PRSR…RTPP) and 336–351 (PRHRRSRSPVRRRRRS). Residues 300-702 (RRHRSRSRSY…NKRHSPSPRP (403 aa)) are necessary for speckles and matrix localization. Low complexity predominate over residues 352 to 368 (SASLSGSSSSSSSSRSR). 4 positions are modified to phosphoserine: Ser389, Ser391, Ser393, and Ser402. At Thr406 the chain carries Phosphothreonine. A Phosphoserine modification is found at Ser414. Residue Thr416 is modified to Phosphothreonine. 4 positions are modified to phosphoserine: Ser420, Ser429, Ser431, and Ser436. The segment covering 428–438 (VSVSPGRTSGK) has biased composition (polar residues). A Glycyl lysine isopeptide (Lys-Gly) (interchain with G-Cter in SUMO2) cross-link involves residue Lys447. A phosphoserine mark is found at Ser450 and Ser452. Lys459 is covalently cross-linked (Glycyl lysine isopeptide (Lys-Gly) (interchain with G-Cter in SUMO2)). Phosphoserine occurs at positions 463 and 465. Lys472 participates in a covalent cross-link: Glycyl lysine isopeptide (Lys-Gly) (interchain with G-Cter in SUMO2). Residue Ser478 is modified to Phosphoserine. A compositionally biased stretch (low complexity) spans 478 to 501 (SVQQRRQYRRQNQQSSSDSGSSSS). Over residues 503-518 (EDERPKRSHVKNGEVG) the composition is skewed to basic and acidic residues. Residues Ser524, Ser526, Ser528, Ser530, Ser532, Ser563, and Ser565 each carry the phosphoserine modification. Over residues 557–574 (SGRRRRSPSPPPTRRRRS) the composition is skewed to basic residues. A Phosphothreonine modification is found at Thr569. Residues Ser574 and Ser576 each carry the phosphoserine modification. Residues 581-606 (PRRRRTPTPPPRRRTPSPPPRRRSPS) show a composition bias toward basic residues. Residues Thr586, Thr588, and Thr595 each carry the phosphothreonine modification. Phosphoserine is present on Ser597. Residues 607 to 619 (PRRYSPPIQRRYS) show a composition bias toward low complexity. Phosphotyrosine is present on Tyr610. Ser611, Ser619, and Ser621 each carry phosphoserine. Thr628 bears the Phosphothreonine mark. 5 positions are modified to phosphoserine: Ser630, Ser640, Ser642, Ser650, and Ser652. Residues 635–650 (PKRRASPSPPPKRRVS) show a composition bias toward basic residues. A compositionally biased stretch (basic residues) spans 663-677 (TKRRSPSLSSKHRKG). Residues 699-713 (SPRPRAPQTSSPPPV) are compositionally biased toward pro residues. Residues Ser708, Ser709, Ser718, Ser720, Ser726, and Ser728 each carry the phosphoserine modification. Low complexity-rich tracts occupy residues 714 to 732 (RRGASSSPQRRQSPSPSTR), 749 to 772 (AASPSPQSVRRVSSSRSVSGSPEP), and 782 to 799 (SPVQSQSPSTNWSPAVPV). At Thr731 the chain carries Phosphothreonine. Residues Ser751, Ser753, Ser761, Ser765, Ser767, Ser769, Ser782, Ser786, Ser788, and Ser790 each carry the phosphoserine modification. Thr791 bears the Phosphothreonine mark. Residues Ser794 and Ser804 each carry the phosphoserine modification. At Thr806 the chain carries Phosphothreonine. Ser808, Ser810, and Ser815 each carry phosphoserine. Over residues 822–847 (KKKKKKKDKKHKKDKKHKKHKKHKKE) the composition is skewed to basic residues. A compositionally biased stretch (low complexity) spans 850–879 (VAAAAAAAVTPAAIAAATTTLAQEEPVAAP). Lys882 participates in a covalent cross-link: Glycyl lysine isopeptide (Lys-Gly) (interchain with G-Cter in SUMO2). The residue at position 885 (Thr885) is a Phosphothreonine. Residue Ser887 is modified to Phosphoserine. Residues 895-905 (DLEKHLREKAL) show a composition bias toward basic and acidic residues. Ser914 bears the Phosphoserine mark.

The protein belongs to the splicing factor SR family. In terms of assembly, identified in the spliceosome C complex. Found in a pre-mRNA splicing complex with SFRS4, SFRS5, SNRP70, SNRPA1, SRRM1 and SRRM2. Component of the minor spliceosome, which splices U12-type introns. Found in a pre-mRNA exonic splicing enhancer (ESE) complex with SNRP70, SNRPA1, SRRM1 and TRA2B/SFRS10. Found in a mRNA splicing-dependent exon junction complex (EJC) with DEK, PRPF8, NCBP1, RBM8A, RNPS1, SRRM1 and ALYREF/THOC4. Interacts with DDX39B, CPSF1, RBM8A, RNPS1, and ALYREF/THOC4. Seems to be a compound of RNA export complexes that are released from speckles in a ATP-dependent manner. Post-translationally, phosphorylated on multiple serine and threonine residues by DYRK3 during the G2-to-M transition, after the nuclear-envelope breakdown. Phosphorylation by DYRK3 promotes disassembly of nuclear speckles. Citrullinated by PADI4.

In terms of biological role, part of pre- and post-splicing multiprotein mRNP complexes. As a component of the minor spliceosome, involved in the splicing of U12-type introns in pre-mRNAs. Involved in numerous pre-mRNA processing events. Promotes constitutive and exonic splicing enhancer (ESE)-dependent splicing activation by bridging together sequence-specific (SR family proteins, SFRS4, SFRS5 and TRA2B/SFRS10) and basal snRNP (SNRP70 and SNRPA1) factors of the spliceosome. Stimulates mRNA 3'-end cleavage independently of the formation of an exon junction complex. Binds both pre-mRNA and spliced mRNA 20-25 nt upstream of exon-exon junctions. Binds RNA and DNA with low sequence specificity and has similar preference for either double- or single-stranded nucleic acid substrates. In Pongo abelii (Sumatran orangutan), this protein is Serine/arginine repetitive matrix protein 1 (SRRM1).